A 368-amino-acid polypeptide reads, in one-letter code: 2-aminoethylphosphonate--pyruvate transaminase (368 aa).

Lys-192 carries the post-translational modification N6-(pyridoxal phosphate)lysine.

The protein belongs to the class-V pyridoxal-phosphate-dependent aminotransferase family. PhnW subfamily. Homodimer. Pyridoxal 5'-phosphate serves as cofactor.

The catalysed reaction is (2-aminoethyl)phosphonate + pyruvate = phosphonoacetaldehyde + L-alanine. Functionally, involved in phosphonate degradation. The protein is 2-aminoethylphosphonate--pyruvate transaminase of Pseudomonas putida (strain W619).